The chain runs to 224 residues: MLNKIYDWVDERLDITPMWRDIADHEVPEHVNPAHHFSAFVYCFGGLTFFVTVIQVLSGMFLTMYYVPDIKNAWESVYYLQNEVAFGQIVRGMHHWGASLVIVMMFLHTLRVFFQGAYKKPRELNWIVGVLIFFVMLGLGFTGYLLPWDMKALFATKVGLQIAEATPLIGTQVKTLLAGHPDIVGAQTLTRFFAIHVFFLPAALFGLMAAHFIMIRKQGISGPL.

The chain crosses the membrane as a helical span at residues F37–L57. Position 42 (Y42) interacts with heme b. Residue C43 coordinates heme c. The heme b site is built by R91, H94, H108, and R111. 3 helical membrane-spanning segments follow: residues W96 to G116, W126 to L146, and I195 to I215. Heme b is bound by residues H196 and H211. Residues R216 and I220 each coordinate heme c. S221 provides a ligand contact to heme b.

It belongs to the cytochrome b family. The main subunits of the menaquinol:cytochrome c complex are a Rieske-type iron-sulfur protein (QcrA), a cytochrome b (QcrB) and a cytochrome c (QcrC). The cofactor is heme b. It depends on heme c as a cofactor.

It localises to the cell membrane. In terms of biological role, component of the menaquinol:cytochrome c reductase complex. This chain is Menaquinol:cytochrome c reductase cytochrome b subunit, found in Bacillus subtilis (strain 168).